Here is a 598-residue protein sequence, read N- to C-terminus: Pentatricopeptide repeat-containing protein At1g09900 (598 aa).

PPR repeat units follow at residues 101 to 135, 136 to 170, 171 to 201, 203 to 237, 238 to 272, 273 to 307, 308 to 342, 343 to 377, 378 to 412, 413 to 447, 448 to 482, 483 to 517, 518 to 552, and 553 to 587; these read EDVE…GNVP, DIIP…GAVP, DVIT…MSVS, DVVT…DCYP, DVIT…GCTP, DVVT…GCQP, NVIT…GFSP, SVVT…GCQP, NSLS…GCYP, DIVT…GCSP, VLIT…DLKP, DTIT…GIRP, NAVT…GCKP, and NETS…GLMK.

It belongs to the PPR family. P subfamily.

In Arabidopsis thaliana (Mouse-ear cress), this protein is Pentatricopeptide repeat-containing protein At1g09900.